The primary structure comprises 145 residues: D-aminoacyl-tRNA deacylase (145 aa).

Positions 137–138 match the Gly-cisPro motif, important for rejection of L-amino acids motif; the sequence is GP.

This sequence belongs to the DTD family. In terms of assembly, homodimer.

The protein localises to the cytoplasm. It catalyses the reaction glycyl-tRNA(Ala) + H2O = tRNA(Ala) + glycine + H(+). The enzyme catalyses a D-aminoacyl-tRNA + H2O = a tRNA + a D-alpha-amino acid + H(+). Functionally, an aminoacyl-tRNA editing enzyme that deacylates mischarged D-aminoacyl-tRNAs. Also deacylates mischarged glycyl-tRNA(Ala), protecting cells against glycine mischarging by AlaRS. Acts via tRNA-based rather than protein-based catalysis; rejects L-amino acids rather than detecting D-amino acids in the active site. By recycling D-aminoacyl-tRNA to D-amino acids and free tRNA molecules, this enzyme counteracts the toxicity associated with the formation of D-aminoacyl-tRNA entities in vivo and helps enforce protein L-homochirality. The protein is D-aminoacyl-tRNA deacylase of Methylacidiphilum infernorum (isolate V4) (Methylokorus infernorum (strain V4)).